The sequence spans 401 residues: Probable tRNA sulfurtransferase (401 aa).

In terms of domain architecture, THUMP spans 63-168 (TTAEQALSYL…EREAFLYGAR (106 aa)). ATP contacts are provided by residues 186–187 (LL), 211–212 (YF), R268, G290, and Q299.

Belongs to the ThiI family.

The protein localises to the cytoplasm. It catalyses the reaction [ThiI sulfur-carrier protein]-S-sulfanyl-L-cysteine + a uridine in tRNA + 2 reduced [2Fe-2S]-[ferredoxin] + ATP + H(+) = [ThiI sulfur-carrier protein]-L-cysteine + a 4-thiouridine in tRNA + 2 oxidized [2Fe-2S]-[ferredoxin] + AMP + diphosphate. It carries out the reaction [ThiS sulfur-carrier protein]-C-terminal Gly-Gly-AMP + S-sulfanyl-L-cysteinyl-[cysteine desulfurase] + AH2 = [ThiS sulfur-carrier protein]-C-terminal-Gly-aminoethanethioate + L-cysteinyl-[cysteine desulfurase] + A + AMP + 2 H(+). Its pathway is cofactor biosynthesis; thiamine diphosphate biosynthesis. In terms of biological role, catalyzes the ATP-dependent transfer of a sulfur to tRNA to produce 4-thiouridine in position 8 of tRNAs, which functions as a near-UV photosensor. Also catalyzes the transfer of sulfur to the sulfur carrier protein ThiS, forming ThiS-thiocarboxylate. This is a step in the synthesis of thiazole, in the thiamine biosynthesis pathway. The sulfur is donated as persulfide by IscS. This Treponema pallidum (strain Nichols) protein is Probable tRNA sulfurtransferase.